A 255-amino-acid chain; its full sequence is Putative Myb family transcription factor At1g14600 (255 aa).

The 61-residue stretch at 20–80 (RSPVPRLRWT…HLQMYRGSRI (61 aa)) folds into the HTH myb-type domain. The segment at residues 51–76 (PKLVLKIMDVKGLTISHVKSHLQMYR) is a DNA-binding region (H-T-H motif). A disordered region spans residues 80–110 (ITLLGKPEESSSPSSRRRRRQDNEEDHLHDN).

The protein resides in the nucleus. Putative transcription factor. In Arabidopsis thaliana (Mouse-ear cress), this protein is Putative Myb family transcription factor At1g14600.